Reading from the N-terminus, the 205-residue chain is Guanylate kinase (205 aa).

Positions 17–195 constitute a Guanylate kinase-like domain; the sequence is SRLLVLSGPS…AVEAVERLLF (179 aa). Residue 24–31 participates in ATP binding; that stretch reads GPSGVGKD.

It belongs to the guanylate kinase family.

It is found in the cytoplasm. The catalysed reaction is GMP + ATP = GDP + ADP. Functionally, essential for recycling GMP and indirectly, cGMP. The protein is Guanylate kinase of Gloeobacter violaceus (strain ATCC 29082 / PCC 7421).